Reading from the N-terminus, the 381-residue chain is Cobalt-precorrin-5B C(1)-methyltransferase (381 aa).

It belongs to the CbiD family.

The enzyme catalyses Co-precorrin-5B + S-adenosyl-L-methionine = Co-precorrin-6A + S-adenosyl-L-homocysteine. It functions in the pathway cofactor biosynthesis; adenosylcobalamin biosynthesis; cob(II)yrinate a,c-diamide from sirohydrochlorin (anaerobic route): step 6/10. In terms of biological role, catalyzes the methylation of C-1 in cobalt-precorrin-5B to form cobalt-precorrin-6A. The chain is Cobalt-precorrin-5B C(1)-methyltransferase from Methylococcus capsulatus (strain ATCC 33009 / NCIMB 11132 / Bath).